The primary structure comprises 387 residues: Zinc finger transcription factor YY1 (387 aa).

C2H2-type zinc fingers lie at residues 79-103 (FLCS…SHIH), 108-132 (YVCD…YLIH), 138-162 (YICT…MKTH), 168-193 (HICP…AAYH), and 230-255 (YACP…KREH). The MED18-binding stretch occupies residues 201-290 (TPKYTPPAEK…DDGSDQDVYR (90 aa)). Residues 258 to 387 (HLQEENADTP…DDDEETEYED (130 aa)) are disordered. Ser-284 carries the phosphoserine modification. Basic residues predominate over residues 291 to 305 (KHASNGKGQTHKQQS). The Nuclear localization signal signature appears at 319–326 (GKKGSTSS). Residues 339–367 (AKETFEEVEREEEEDSEETEEDRDNVEDG) adopt a coiled-coil conformation. Composition is skewed to acidic residues over residues 344 to 363 (EEVE…DRDN) and 373 to 387 (NNED…EYED).

Interacts with MED18 to suppress disease susceptibility via the repression of genes glutaredoxins GRX480, GRXS13 and thioredoxin TRX-h5. As to expression, mostly expressed in flowers, to a lower extent in seedlings, stems and leaves, and, at low levels, in roots and senescent leaves.

The protein resides in the nucleus. In terms of biological role, dual-function transcription factor with both repression and activation activities. Binds to 5'-CCATATT-3' motif in target gene promoters (e.g. ABR1). Also binds to G-rich DNA motif 5'-GGGGGCAGTGG-3'. Regulates the expression of genes involved in diverse cellular pathways, including glucose metabolism, photosynthesis, phototropism and stress response (e.g. salt, drought and osmotic stress). Regulates plant immunity, especially during necrotrophic fungal infection (e.g. B.cinerea). Binds to ABR1 promoter and promotes its expression, thus negatively regulating the abscisic acid (ABA) signaling pathway. Represses ABA- and salt-responsive genes expression. The polypeptide is Zinc finger transcription factor YY1 (Arabidopsis thaliana (Mouse-ear cress)).